Here is a 383-residue protein sequence, read N- to C-terminus: MGASQKNQELIGGLILFSAALLAIVVNNSPLASYYAMLETINVKLGIENLVIDKNLMHWINDGLMAIYFLYIGLEIKREIIVGTLSKPSNIITPAIAAFAGLAMPSLIYLSINHDIKVINGWAIPSATDIAFTLGILALLGTRVPAKLKLLVITIAIFDDIAAIAIIAIFYTKSLSLLSLSLGTLFILAMIICNRIFKINRSSVYVVLGFFAWFCTIKSGVHATLAGFTTALCIPFRENDKDSPANFMEDSLHPWIIYFILPVFAFANAGISFSGISFSILFEPITLGIIWGLFVGKQLGIFSILAVFKKLKWFKLGESFSNLQLYGISLLCGIGFTMSLFIGVLAFNDTHLLNAIKIGVVVGSVLSGFFGYIVLRFIVTNPS.

Helical transmembrane passes span 10 to 30 (LIGG…NNSP), 56 to 76 (LMHW…GLEI), 91 to 111 (IITP…IYLS), 121 to 141 (GWAI…ALLG), 150 to 170 (LLVI…IAIF), 174 to 194 (SLSL…IICN), 206 to 226 (VVLG…ATLA), 254 to 274 (PWII…ISFS), 289 to 308 (IIWG…LAVF), 327 to 347 (GISL…VLAF), and 355 to 375 (AIKI…YIVL).

This sequence belongs to the NhaA Na(+)/H(+) (TC 2.A.33) antiporter family.

The protein resides in the cell inner membrane. The catalysed reaction is Na(+)(in) + 2 H(+)(out) = Na(+)(out) + 2 H(+)(in). Na(+)/H(+) antiporter that extrudes sodium in exchange for external protons. This is Na(+)/H(+) antiporter NhaA from Francisella tularensis subsp. tularensis (strain SCHU S4 / Schu 4).